Consider the following 366-residue polypeptide: Autophagy-related protein 18b (366 aa).

WD repeat units lie at residues 6–44 (SLPS…LCYE), 178–218 (AHRS…KSYS), and 223–265 (TYPS…NQRS).

This sequence belongs to the WD repeat PROPPIN family. Component of the PI(3,5)P2 regulatory complex at least composed of ATG18, SAC/FIG4, FAB1 and VAC14. Expressed in roots, stems, flowers and leaves.

It is found in the preautophagosomal structure membrane. It localises to the vacuole membrane. Its function is as follows. The PI(3,5)P2 regulatory complex regulates both the synthesis and turnover of phosphatidylinositol 3,5-bisphosphate (PtdIns(3,5)P2). Required for autophagy. In Arabidopsis thaliana (Mouse-ear cress), this protein is Autophagy-related protein 18b (ATG18B).